A 309-amino-acid polypeptide reads, in one-letter code: Homoserine O-succinyltransferase (309 aa).

Residue Cys-142 is the Acyl-thioester intermediate of the active site. Positions 163 and 192 each coordinate substrate. His-235 functions as the Proton acceptor in the catalytic mechanism. Glu-237 is a catalytic residue. Arg-249 is a substrate binding site.

The protein belongs to the MetA family. Homodimer.

It is found in the cytoplasm. It catalyses the reaction L-homoserine + succinyl-CoA = O-succinyl-L-homoserine + CoA. Its pathway is amino-acid biosynthesis; L-methionine biosynthesis via de novo pathway; O-succinyl-L-homoserine from L-homoserine: step 1/1. Functionally, transfers a succinyl group from succinyl-CoA to L-homoserine, forming succinyl-L-homoserine. The chain is Homoserine O-succinyltransferase from Salmonella gallinarum (strain 287/91 / NCTC 13346).